Here is an 85-residue protein sequence, read N- to C-terminus: Large ribosomal subunit protein bL27 (85 aa).

Residues 1 to 21 are disordered; the sequence is MAHKKAGGSTRNGRDSNAQRL. A compositionally biased stretch (polar residues) spans 9–19; that stretch reads STRNGRDSNAQ.

It belongs to the bacterial ribosomal protein bL27 family.

The protein is Large ribosomal subunit protein bL27 of Pectobacterium carotovorum subsp. carotovorum (strain PC1).